Here is a 410-residue protein sequence, read N- to C-terminus: Cysteine desulfurase IscS (410 aa).

Pyridoxal 5'-phosphate-binding positions include 79–80 (AT), Asn-159, Gln-187, and 207–209 (SGH). Lys-210 is modified (N6-(pyridoxal phosphate)lysine). Thr-248 is a pyridoxal 5'-phosphate binding site. Cys-334 (cysteine persulfide intermediate) is an active-site residue. Residue Cys-334 coordinates [2Fe-2S] cluster.

It belongs to the class-V pyridoxal-phosphate-dependent aminotransferase family. NifS/IscS subfamily. As to quaternary structure, homodimer. Forms a heterotetramer with IscU, interacts with other sulfur acceptors. Pyridoxal 5'-phosphate is required as a cofactor.

The protein localises to the cytoplasm. The catalysed reaction is (sulfur carrier)-H + L-cysteine = (sulfur carrier)-SH + L-alanine. The protein operates within cofactor biosynthesis; iron-sulfur cluster biosynthesis. In terms of biological role, master enzyme that delivers sulfur to a number of partners involved in Fe-S cluster assembly, tRNA modification or cofactor biosynthesis. Catalyzes the removal of elemental sulfur atoms from cysteine to produce alanine. Functions as a sulfur delivery protein for Fe-S cluster synthesis onto IscU, an Fe-S scaffold assembly protein, as well as other S acceptor proteins. In Ehrlichia chaffeensis (strain ATCC CRL-10679 / Arkansas), this protein is Cysteine desulfurase IscS.